The primary structure comprises 156 residues: Rhombotin-1 (156 aa).

LIM zinc-binding domains are found at residues 22-84 (KGCA…LFGT) and 86-148 (GNCA…GQLN).

As to expression, expressed in the brain and not in the thymus.

It localises to the nucleus. Its function is as follows. May be involved in gene regulation within neural lineage cells potentially by direct DNA binding or by binding to other transcription factors. The sequence is that of Rhombotin-1 (LMO1) from Bos taurus (Bovine).